Reading from the N-terminus, the 581-residue chain is Ras-specific guanine nucleotide-releasing factor RalGPS1 (581 aa).

A disordered region spans residues 1–31 (MYRRNGLPASVSITSRNTQDSSSSESLDGRS). The 240-residue stretch at 49-288 (TPEEFASQIT…YSLSLKIEPG (240 aa)) folds into the Ras-GEF domain. The disordered stretch occupies residues 320-339 (PDTSVVAHLPTPPPARHRKS). The PXXP motif lies at 329-332 (PTPP). In terms of domain architecture, PH spans 455–567 (SITIEGPLRR…WHRHLAEACR (113 aa)).

The protein localises to the cytoplasm. It is found in the cell membrane. In terms of biological role, guanine nucleotide exchange factor. May be involved in cytoskeletal organization. This chain is Ras-specific guanine nucleotide-releasing factor RalGPS1 (ralgps1), found in Danio rerio (Zebrafish).